The following is a 65-amino-acid chain: Large ribosomal subunit protein bL35 (65 aa).

Composition is skewed to basic residues over residues 1-15 (MPKM…KRFT) and 26-44 (QAFK…KRQL). A disordered region spans residues 1–65 (MPKMKTKKSA…KSVRAMMPYA (65 aa)).

This sequence belongs to the bacterial ribosomal protein bL35 family.

This is Large ribosomal subunit protein bL35 from Ralstonia nicotianae (strain ATCC BAA-1114 / GMI1000) (Ralstonia solanacearum).